Reading from the N-terminus, the 149-residue chain is MSILNTTEIMELIPNRYPILFMDYVDELEPGKSIVATKNVTINEEFFQGHFPGNPVMPGVLIIESLAQAASILILKSEEFAGKTAYLGAINGAKFRQIVRPGDVLKLHVEMIKKKRNMGVVETFAMVGDKKVCQAELTFIVGATDKKDK.

Residue H50 is part of the active site.

Belongs to the thioester dehydratase family. FabZ subfamily.

Its subcellular location is the cytoplasm. The catalysed reaction is a (3R)-hydroxyacyl-[ACP] = a (2E)-enoyl-[ACP] + H2O. Involved in unsaturated fatty acids biosynthesis. Catalyzes the dehydration of short chain beta-hydroxyacyl-ACPs and long chain saturated and unsaturated beta-hydroxyacyl-ACPs. This Pediococcus pentosaceus (strain ATCC 25745 / CCUG 21536 / LMG 10740 / 183-1w) protein is 3-hydroxyacyl-[acyl-carrier-protein] dehydratase FabZ.